Here is a 107-residue protein sequence, read N- to C-terminus: Iron-sulfur cluster assembly protein CyaY (107 aa).

The protein belongs to the frataxin family.

Functionally, involved in iron-sulfur (Fe-S) cluster assembly. May act as a regulator of Fe-S biogenesis. In Neisseria meningitidis serogroup C / serotype 2a (strain ATCC 700532 / DSM 15464 / FAM18), this protein is Iron-sulfur cluster assembly protein CyaY.